Here is a 31-residue protein sequence, read N- to C-terminus: Cytochrome b6-f complex subunit 6 (31 aa).

The chain crosses the membrane as a helical span at residues 3–23; that stretch reads TITSYFGFLLAVLTITSGLFI.

The protein belongs to the PetL family. In terms of assembly, the 4 large subunits of the cytochrome b6-f complex are cytochrome b6, subunit IV (17 kDa polypeptide, PetD), cytochrome f and the Rieske protein, while the 4 small subunits are PetG, PetL, PetM and PetN. The complex functions as a dimer.

It is found in the plastid. The protein localises to the chloroplast thylakoid membrane. Component of the cytochrome b6-f complex, which mediates electron transfer between photosystem II (PSII) and photosystem I (PSI), cyclic electron flow around PSI, and state transitions. PetL is important for photoautotrophic growth as well as for electron transfer efficiency and stability of the cytochrome b6-f complex. The chain is Cytochrome b6-f complex subunit 6 from Lotus japonicus (Lotus corniculatus var. japonicus).